Consider the following 208-residue polypeptide: Probable GTP-binding protein EngB (208 aa).

An EngB-type G domain is found at 22–195 (GLPEIALAGR…WGALEDIFVE (174 aa)). GTP is bound by residues 30 to 37 (GRSNVGKS), 57 to 61 (GKTRT), 75 to 78 (DLPG), 142 to 145 (TKSD), and 174 to 176 (ISS). Mg(2+) is bound by residues Ser37 and Thr59.

The protein belongs to the TRAFAC class TrmE-Era-EngA-EngB-Septin-like GTPase superfamily. EngB GTPase family. It depends on Mg(2+) as a cofactor.

Functionally, necessary for normal cell division and for the maintenance of normal septation. This chain is Probable GTP-binding protein EngB, found in Alkaliphilus metalliredigens (strain QYMF).